A 427-amino-acid polypeptide reads, in one-letter code: Transcobalamin-2 (427 aa).

The signal sequence occupies residues 1–18 (MELLKALLLLSGVLGALA). 3 disulfide bridges follow: Cys21-Cys268, Cys116-Cys310, and Cys165-Cys208. Residues 152–156 (TSYYQ), His193, 193–197 (HLSVD), Asn245, Ser248, Gln292, and 395–397 (WQL) each bind cob(II)alamin.

It belongs to the eukaryotic cobalamin transport proteins family. In terms of assembly, interacts with CD320 (via LDL-receptor class A domains).

It is found in the secreted. Functionally, primary vitamin B12-binding and transport protein. Delivers cobalamin to cells. The polypeptide is Transcobalamin-2 (Tcn2) (Rattus norvegicus (Rat)).